A 274-amino-acid chain; its full sequence is 2,3,4,5-tetrahydropyridine-2,6-dicarboxylate N-succinyltransferase (274 aa).

Substrate contacts are provided by R106 and D143.

It belongs to the transferase hexapeptide repeat family. In terms of assembly, homotrimer.

The protein resides in the cytoplasm. It carries out the reaction (S)-2,3,4,5-tetrahydrodipicolinate + succinyl-CoA + H2O = (S)-2-succinylamino-6-oxoheptanedioate + CoA. The protein operates within amino-acid biosynthesis; L-lysine biosynthesis via DAP pathway; LL-2,6-diaminopimelate from (S)-tetrahydrodipicolinate (succinylase route): step 1/3. This Albidiferax ferrireducens (strain ATCC BAA-621 / DSM 15236 / T118) (Rhodoferax ferrireducens) protein is 2,3,4,5-tetrahydropyridine-2,6-dicarboxylate N-succinyltransferase.